Consider the following 282-residue polypeptide: Armadillo repeat-containing protein 1 (282 aa).

Position 1 is an N-acetylmethionine (Met-1). The stretch at 39 to 81 is one ARM repeat; it reads GCLPGLILFMDHPNPPVVHSALLALRYLAECRANREKMKGELG. Thr-137 bears the Phosphothreonine mark. 4 positions are modified to phosphoserine: Ser-189, Ser-246, Ser-260, and Ser-267. Positions 239–261 are disordered; that stretch reads DYLPEDESPTKEQDKAVSRVGSH. Over residues 246–255 the composition is skewed to basic and acidic residues; that stretch reads SPTKEQDKAV.

Interacts with mitochondrial contact site and cristae organizing system (MICOS) complex components IMMT/MIC60 and MICOS10/MIC10. Interacts with mitochondrial outer membrane sorting assembly machinery (SAM) complex components SAMM50 and MTX1.

It localises to the cytoplasm. Its subcellular location is the mitochondrion. The protein resides in the mitochondrion outer membrane. Functionally, in association with mitochondrial contact site and cristae organizing system (MICOS) complex components and mitochondrial outer membrane sorting assembly machinery (SAM) complex components may regulate mitochondrial dynamics playing a role in determining mitochondrial length, distribution and motility. The protein is Armadillo repeat-containing protein 1 (Armc1) of Mus musculus (Mouse).